We begin with the raw amino-acid sequence, 457 residues long: tRNA(Ile)-lysidine synthase (457 aa).

27–32 (SGGLDS) provides a ligand contact to ATP.

Belongs to the tRNA(Ile)-lysidine synthase family.

The protein localises to the cytoplasm. The enzyme catalyses cytidine(34) in tRNA(Ile2) + L-lysine + ATP = lysidine(34) in tRNA(Ile2) + AMP + diphosphate + H(+). In terms of biological role, ligates lysine onto the cytidine present at position 34 of the AUA codon-specific tRNA(Ile) that contains the anticodon CAU, in an ATP-dependent manner. Cytidine is converted to lysidine, thus changing the amino acid specificity of the tRNA from methionine to isoleucine. The polypeptide is tRNA(Ile)-lysidine synthase (Hamiltonella defensa subsp. Acyrthosiphon pisum (strain 5AT)).